The chain runs to 339 residues: Flap endonuclease 1 (339 aa).

Residues Met1–Lys99 are N-domain. Positions 29, 81, 153, 155, 174, 176, and 237 each coordinate Mg(2+). Positions Glu117–Gly258 are I-domain. The tract at residues Asn329–Phe337 is interaction with PCNA.

This sequence belongs to the XPG/RAD2 endonuclease family. FEN1 subfamily. In terms of assembly, interacts with PCNA. PCNA stimulates the nuclease activity without altering cleavage specificity. It depends on Mg(2+) as a cofactor.

Its function is as follows. Structure-specific nuclease with 5'-flap endonuclease and 5'-3' exonuclease activities involved in DNA replication and repair. During DNA replication, cleaves the 5'-overhanging flap structure that is generated by displacement synthesis when DNA polymerase encounters the 5'-end of a downstream Okazaki fragment. Binds the unpaired 3'-DNA end and kinks the DNA to facilitate 5' cleavage specificity. Cleaves one nucleotide into the double-stranded DNA from the junction in flap DNA, leaving a nick for ligation. Also involved in the base excision repair (BER) pathway. Acts as a genome stabilization factor that prevents flaps from equilibrating into structures that lead to duplications and deletions. Also possesses 5'-3' exonuclease activity on nicked or gapped double-stranded DNA. This Nanoarchaeum equitans (strain Kin4-M) protein is Flap endonuclease 1.